A 280-amino-acid polypeptide reads, in one-letter code: Soluble inorganic pyrophosphatase 1, chloroplastic (280 aa).

Residue Arg120 coordinates diphosphate. Residues Asp152, Asp157, and Asp189 each coordinate Mg(2+).

In terms of assembly, monomer. It depends on Mg(2+) as a cofactor. Post-translationally, the N-terminus is blocked.

The protein resides in the plastid. It localises to the chloroplast. The catalysed reaction is diphosphate + H2O = 2 phosphate + H(+). This Chlamydomonas reinhardtii (Chlamydomonas smithii) protein is Soluble inorganic pyrophosphatase 1, chloroplastic (ppa1).